The sequence spans 921 residues: MTANRDAALSSHRHPGCAQRPRTPTFASSSQRRSAFGFDDGNFPGLGERSHAPGSRLGARRRAKTARGLRGHRQRGAGAGLSRPGSARAPSPPRPGGPENPGGVLSVELPGLLAQLARSFALLLPVYALGYLGLSFSWVLLALALLAWCRRSRGLKALRLCRALALLEDEERVVRLGVRACDLPAWVHFPDTERAEWLNKTVKHMWPFICQFIEKLFRETIEPAVRGANTHLSTFSFTKVDVGQQPLRINGVKVYTENVDKRQIILDLQISFVGNCEIDLEIKRYFCRAGVKSIQIHGTMRVILEPLIGDMPLVGALSIFFLRKPLLEINWTGLTNLLDVPGLNGLSDTIILDIISNYLVLPNRITVPLVSEVQIAQLRFPVPKGVLRIHFIEAQDLQGKDTYLKGLVKGKSDPYGIIRVGNQIFQSRVIKENLSPKWNEVYEALVYEHPGQELEIELFDEDPDKDDFLGSLMIDLIEVEKERLLDEWFTLDEVPKGKLHLRLEWLTLMPNASNLDKVLTDIKADKDQANDGLSSALLILYLDSARNLPSGKKISSNPNPVVQMSVGHKAQESKIRYKTNEPVWEENFTFFIHNPKRQDLEVEVRDEQHQCSLGNLKVPLSQLLTSEDMTVSQRFQLSNSGPNSTIKMKIALRVLHLEKRERPPDHQHSAQVKRPSVSKEGRKTSIKSHMSGSPGPGGSNTAPSTPVIGGSDKPGMEEKAQPPEAGPQGLHDLGRSSSSLLASPGHISVKEPTPSIASDISLPIATQELRQRLRQLENGTTLGQSPLGQIQLTIRHSSQRNKLIVVVHACRNLIAFSEDGSDPYVRMYLLPDKRRSGRRKTHVSKKTLNPVFDQSFDFSVSLPEVQRRTLDVAVKNSGGFLSKDKGLLGKVLVALASEELAKGWTQWYDLTEDGTRPQAMT.

At 1–103 (MTANRDAALS…RPGGPENPGG (103 aa)) the chain is on the cytoplasmic side. Residues 1–103 (MTANRDAALS…RPGGPENPGG (103 aa)) are disordered. Residues 58–75 (GARRRAKTARGLRGHRQR) show a composition bias toward basic residues. A helical membrane pass occupies residues 104–124 (VLSVELPGLLAQLARSFALLL). The Lumenal segment spans residues 125–127 (PVY). Residues 128 to 148 (ALGYLGLSFSWVLLALALLAW) traverse the membrane as a helical segment. At 149-921 (CRRSRGLKAL…EDGTRPQAMT (773 aa)) the chain is on the cytoplasmic side. Residues 191–370 (DTERAEWLNK…LPNRITVPLV (180 aa)) enclose the SMP-LTD domain. C2 domains follow at residues 369–489 (LVSE…DEWF) and 514–639 (NLDK…QLSN). The Ca(2+) site is built by lysine 400, aspartate 401, aspartate 413, aspartate 460, glutamate 461, aspartate 462, aspartate 464, aspartate 466, and aspartate 467. The segment at 660 to 754 (RERPPDHQHS…GHISVKEPTP (95 aa)) is disordered. Phosphoserine is present on residues serine 691 and serine 693. Threonine 705 is subject to Phosphothreonine. A phosphoserine mark is found at serine 736, serine 738, serine 739, serine 743, serine 748, serine 755, serine 758, and serine 761. The region spanning 786 to 908 (PLGQIQLTIR…ELAKGWTQWY (123 aa)) is the C2 3 domain. The interval 833-840 (KRRSGRRK) is required for phosphatidylinositol 4,5-bisphosphate-dependent location at the cell membrane.

This sequence belongs to the extended synaptotagmin family. Homodimer. Interacts with ESYT1 and ESYT3. Interacts with FGFR1 that has been activated by FGF1 binding. Interacts with the AP-2 complex; identified in a complex with the AP-2 complex and FGFR1. In terms of tissue distribution, widely expressed with high level in cerebellum.

Its subcellular location is the cell membrane. The protein resides in the endoplasmic reticulum membrane. Tethers the endoplasmic reticulum to the cell membrane and promotes the formation of appositions between the endoplasmic reticulum and the cell membrane. Binds glycerophospholipids in a barrel-like domain and may play a role in cellular lipid transport. Plays a role in FGF signaling via its role in the rapid internalization of FGFR1 that has been activated by FGF1 binding; this occurs most likely via the AP-2 complex. Promotes the localization of SACM1L at endoplasmic reticulum-plasma membrane contact sites (EPCS). The chain is Extended synaptotagmin-2 from Homo sapiens (Human).